The chain runs to 368 residues: Xaa-Pro dipeptidase (368 aa).

The Mn(2+) site is built by Asp223, Asp234, His298, Glu327, and Glu341.

The protein belongs to the peptidase M24B family. Requires Mn(2+) as cofactor.

It localises to the cytoplasm. The catalysed reaction is Xaa-L-Pro dipeptide + H2O = an L-alpha-amino acid + L-proline. The chain is Xaa-Pro dipeptidase (pepQ) from Lactobacillus helveticus (Lactobacillus suntoryeus).